A 255-amino-acid chain; its full sequence is Probable esterase ATEG_07663 (255 aa).

Catalysis depends on charge relay system residues Ser122, Asp200, and His227.

This sequence belongs to the LovG family.

Functionally, probable esterase; part of the cluster B that mediates the biosynthesis of azasperpyranones, members of the azaphilone family that exhibit anti-cancer activities. Azasperpyranones are synthesized by 2 clusters, A and B. Cluster A is responsible for the production of the polyhydric phenol moiety while the azaphilonoid scaffold is produced by the cluster B. The non-reducing polyketide synthase ATEG_03629 produces 5-methyl orsellinic acid, which is then reduced to 5-methyl orsellinic aldehyde by the NRPS-like protein ATEG_03630. 5-methyl orsellinic aldehyde is then first hydroxylated by the FAD-dependent monooxygenase ATEG_03635 and subsequently hydroxylated by the cytochrome P450 monooxygenase ATEG_03631 to produce the unstable polyhydric phenol precursor of azasperpyranones. On the other hand, the polyketide synthase ATEG_07659 is responsible for producing the 3,5-dimethyloctadienone moiety from acetyl-CoA, three malonyl-CoA, and two S-adenosyl methionines (SAM). The 3,5-dimethyloctadienone moiety is then loaded onto the SAT domain of ATEG_07661 and extended with four malonyl-CoA and one SAM, which leads to the formation of 2,4-dihydroxy-6-(5,7-dimethyl-2-oxo-trans-3-trans-5-nonadienyl)-3-methylbenzaldehyde (compound 8) after reductive release and aldol condensation. The FAD-dependent monooxygenase ATEG_07662 is the next enzyme in the biosynthesis sequence and hydroxylates the side chain at the benzylic position of compound 8. In Aspergillus nidulans, afoF, the ortholog of the FAD-dependent oxygenase ATEG_07660, is the key enzyme for the biosynthesis of asperfuranone by catalyzing the hydroxylation at C-8 of to prevent the formation of a six-membered ring hemiacetal intermediate and thus facilitating the formation of a five-membered ring to produce asperfuranone. In Aspergillus terreus, ATEG_07660 is probably not functional, which leads to the formation of the six-membered ring hemiacetal intermediate presperpyranone instead of asperfuranone. Finally, ATEG_03636 is involved in the condensation of the polyhydric phenol moiety produced by cluster A and the perasperpyranone precursor produced by cluster B, to yield azasperpyranone A. Further modifications of azasperpyranone A result in the production of derivatives, including azasperpyranone B to F. The protein is Probable esterase ATEG_07663 of Aspergillus terreus (strain NIH 2624 / FGSC A1156).